The following is a 450-amino-acid chain: Bifunctional protein GlmU (450 aa).

The segment at 1–226 is pyrophosphorylase; it reads MLAVAVLAAG…PDEVNGINNR (226 aa). UDP-N-acetyl-alpha-D-glucosamine contacts are provided by residues 7–10, lysine 21, glutamine 73, and 78–79; these read LAAG and GT. Aspartate 103 contributes to the Mg(2+) binding site. Residues glycine 140, glutamate 155, asparagine 170, and asparagine 224 each coordinate UDP-N-acetyl-alpha-D-glucosamine. Residue asparagine 224 participates in Mg(2+) binding. Residues 227–247 are linker; that stretch reads QQLAQCETMLQERLRHHWMAE. An N-acetyltransferase region spans residues 248–450; that stretch reads GVTFVDPASC…IKENWAGPQG (203 aa). The UDP-N-acetyl-alpha-D-glucosamine site is built by arginine 329 and lysine 347. Histidine 359 functions as the Proton acceptor in the catalytic mechanism. Tyrosine 362 and asparagine 373 together coordinate UDP-N-acetyl-alpha-D-glucosamine. Acetyl-CoA-binding positions include alanine 376, 382–383, alanine 419, and arginine 436; that span reads NY.

In the N-terminal section; belongs to the N-acetylglucosamine-1-phosphate uridyltransferase family. It in the C-terminal section; belongs to the transferase hexapeptide repeat family. As to quaternary structure, homotrimer. Requires Mg(2+) as cofactor.

It is found in the cytoplasm. The catalysed reaction is alpha-D-glucosamine 1-phosphate + acetyl-CoA = N-acetyl-alpha-D-glucosamine 1-phosphate + CoA + H(+). The enzyme catalyses N-acetyl-alpha-D-glucosamine 1-phosphate + UTP + H(+) = UDP-N-acetyl-alpha-D-glucosamine + diphosphate. The protein operates within nucleotide-sugar biosynthesis; UDP-N-acetyl-alpha-D-glucosamine biosynthesis; N-acetyl-alpha-D-glucosamine 1-phosphate from alpha-D-glucosamine 6-phosphate (route II): step 2/2. Its pathway is nucleotide-sugar biosynthesis; UDP-N-acetyl-alpha-D-glucosamine biosynthesis; UDP-N-acetyl-alpha-D-glucosamine from N-acetyl-alpha-D-glucosamine 1-phosphate: step 1/1. It functions in the pathway bacterial outer membrane biogenesis; LPS lipid A biosynthesis. In terms of biological role, catalyzes the last two sequential reactions in the de novo biosynthetic pathway for UDP-N-acetylglucosamine (UDP-GlcNAc). The C-terminal domain catalyzes the transfer of acetyl group from acetyl coenzyme A to glucosamine-1-phosphate (GlcN-1-P) to produce N-acetylglucosamine-1-phosphate (GlcNAc-1-P), which is converted into UDP-GlcNAc by the transfer of uridine 5-monophosphate (from uridine 5-triphosphate), a reaction catalyzed by the N-terminal domain. This is Bifunctional protein GlmU from Synechococcus sp. (strain RCC307).